Reading from the N-terminus, the 98-residue chain is Plastocyanin (98 aa).

Residues 1–98 (DVTVKLGADS…AGMKGTITVQ (98 aa)) enclose the Plastocyanin-like domain. Cu cation contacts are provided by His38, Cys83, His86, and Met91.

Belongs to the plastocyanin family. Cu(2+) is required as a cofactor.

It localises to the plastid. The protein localises to the chloroplast thylakoid membrane. Functionally, participates in electron transfer between P700 and the cytochrome b6-f complex in photosystem I. The protein is Plastocyanin (petE) of Scenedesmus fuscus (Green alga).